Here is a 348-residue protein sequence, read N- to C-terminus: Protein RecA (348 aa).

65 to 72 (GPESSGKT) contributes to the ATP binding site. Residues 326-336 (LLTPAEEKPET) are compositionally biased toward basic and acidic residues. A disordered region spans residues 326 to 348 (LLTPAEEKPETDAAPEIEENEEF). Acidic residues predominate over residues 338-348 (AAPEIEENEEF).

It belongs to the RecA family.

The protein resides in the cytoplasm. Its function is as follows. Can catalyze the hydrolysis of ATP in the presence of single-stranded DNA, the ATP-dependent uptake of single-stranded DNA by duplex DNA, and the ATP-dependent hybridization of homologous single-stranded DNAs. It interacts with LexA causing its activation and leading to its autocatalytic cleavage. This chain is Protein RecA, found in Aliivibrio fischeri (strain ATCC 700601 / ES114) (Vibrio fischeri).